Consider the following 368-residue polypeptide: Propane 2-monooxygenase, hydroxylase component small subunit (368 aa).

Residues 1 to 33 (MSAPAQPRERSFPSIEFTDAEADAREFPSSRSR) are disordered.

This sequence belongs to the TmoE/XamoE family. In terms of assembly, the propane 2-monooxygenase multicomponent enzyme system is composed of an electron transfer component and a monooxygenase component interacting with the effector protein PrmD. The electron transfer component is composed of a reductase (PrmB), and the monooxygenase component is formed by a large subunit (PrmA) and a small subunit (PrmC). Probably requires the presence of the chaperonin-like protein PrmG to ensure a productive folding, resulting of a soluble PrmC, which leads to the active form of PrmABCD.

It catalyses the reaction propane + NADH + O2 + H(+) = propan-2-ol + NAD(+) + H2O. The enzyme catalyses phenol + NADH + O2 + H(+) = hydroquinone + NAD(+) + H2O. In terms of biological role, component of the propane 2-monooxygenase multicomponent enzyme system which is involved in the degradation of propane via the O2-dependent hydroxylation of propane. Under acetone induction, also able to catalyze the oxidation of phenol to yield hydroquinone. This Gordonia sp. (strain TY-5) protein is Propane 2-monooxygenase, hydroxylase component small subunit.